Reading from the N-terminus, the 142-residue chain is Transcriptional regulator MraZ (142 aa).

2 SpoVT-AbrB domains span residues 5–51 (ASAL…PRPE) and 77–120 (AADV…DAAT).

This sequence belongs to the MraZ family. In terms of assembly, forms oligomers.

The protein resides in the cytoplasm. It localises to the nucleoid. The sequence is that of Transcriptional regulator MraZ from Ralstonia pickettii (strain 12J).